The sequence spans 136 residues: Translation initiation factor 5A (136 aa).

A Hypusine modification is found at lysine 36.

The protein belongs to the eIF-5A family.

Its subcellular location is the cytoplasm. Functionally, functions by promoting the formation of the first peptide bond. The chain is Translation initiation factor 5A (eIF5A) from Hyperthermus butylicus (strain DSM 5456 / JCM 9403 / PLM1-5).